The following is a 620-amino-acid chain: Probable potassium transport system protein Kup (620 aa).

Transmembrane regions (helical) follow at residues 11 to 31 (LAFL…LYAF), 51 to 71 (ILSL…LLLV), 100 to 120 (IAML…VITP), 138 to 158 (LAPY…AVQA), 167 to 187 (FFAP…AHAI), 202 to 222 (AVHF…LVVL), 246 to 266 (WFAL…AYLL), 288 to 308 (LILL…SGIF), 334 to 354 (GQIY…FVML), 364 to 384 (AAYG…LVLV), 396 to 416 (VVTI…STST), and 418 to 438 (LMEG…VMYI).

It belongs to the HAK/KUP transporter (TC 2.A.72) family.

The protein localises to the cell inner membrane. It carries out the reaction K(+)(in) + H(+)(in) = K(+)(out) + H(+)(out). Functionally, transport of potassium into the cell. Likely operates as a K(+):H(+) symporter. The sequence is that of Probable potassium transport system protein Kup from Vibrio cholerae serotype O1 (strain ATCC 39541 / Classical Ogawa 395 / O395).